We begin with the raw amino-acid sequence, 752 residues long: Protein GCN20 (752 aa).

Ala-2 is subject to N-acetylalanine. ABC transporter domains lie at Ile-199–Ala-464 and Ile-532–Val-748. ATP-binding positions include Gly-232–Ser-239 and Gly-565–Thr-572.

It belongs to the ABC transporter superfamily. ABCF family. EF3 subfamily. Interacts (via N-terminus) with GCN1 (via C-terminus); this interaction stimulates GCN2 kinase activity in response to amino acid starvation. The GCN1-GCN20 complex interacts with GCN2 on translating ribosomes in amino acid-starved cells; this association stimulates GCN2 kinase activation by uncharged tRNAs, and hence allowing GCN4 translational activation and derepression of amino acid biosynthetic genes. Associates with ribosomes.

Acts as a positive activator of the GCN2 protein kinase activity in response to in response to low amino acid, carbon, or purine availability. Component of the GCN1-GCN20 complex that forms a complex with GCN2 on translating ribosomes; during this process, GCN20 helps GCN1 to act as a chaperone to facilitate delivery of uncharged tRNAs that enter the A site of ribosomes to the tRNA-binding domain of GCN2, and hence stimulating GCN2 kinase activity. Participates in gene-specific mRNA translation activation, such as the transcriptional activator GCN4, by promoting the GCN2-mediated phosphorylation of eukaryotic translation initiation factor 2 (eIF-2-alpha/SUI2) on 'Ser-52', and hence allowing GCN4-mediated reprogramming of amino acid biosynthetic gene expression to alleviate nutrient depletion. The polypeptide is Protein GCN20 (Saccharomyces cerevisiae (strain ATCC 204508 / S288c) (Baker's yeast)).